The following is a 263-amino-acid chain: SPRY domain-containing SOCS box protein 2 (263 aa).

Polar residues predominate over residues 1 to 16 (MGQTALAGGSSSTPTP). Residues 1 to 48 (MGQTALAGGSSSTPTPQALYPDLSCPEGLEELLSAPPPDLGAQRRHGW) form a disordered region. Residues 26-221 (PEGLEELLSA…VRIRYLGERR (196 aa)) form the B30.2/SPRY domain. Residues 222-263 (AEPHSLLHLSRLCVRHNLGDTRLGQVSALPLPPAMKRYLLYQ) form the SOCS box domain.

It belongs to the SPSB family. Component of the probable ECS(SPSB2) E3 ubiquitin-protein ligase complex which contains CUL5, RNF7/RBX2, Elongin BC complex and SPSB2. Interacts with CUL5, RNF7, ELOB and ELOC. Interacts with MET. Interacts (via B30.2/SPRY domain) with PAWR; this interaction occurs in association with the Elongin BC complex. Interacts with NOS2. In terms of assembly, (Microbial infection) Interacts (via C-terminus) with HCV envelope glycoprotein E1. Interacts (via C-terminus) with HCV non-structural protein 5A; this interaction targets NS5A for ubiquitination and degradation.

Its subcellular location is the cytoplasm. It localises to the cytosol. It participates in protein modification; protein ubiquitination. In terms of biological role, substrate recognition component of a SCF-like ECS (Elongin BC-CUL2/5-SOCS-box protein) E3 ubiquitin-protein ligase complex which mediates the ubiquitination and subsequent proteasomal degradation of target proteins. Negatively regulates nitric oxide (NO) production and limits cellular toxicity in activated macrophages by mediating the ubiquitination and proteasomal degradation of NOS2. Acts as a bridge which links NOS2 with the ECS E3 ubiquitin ligase complex components ELOC and CUL5. This is SPRY domain-containing SOCS box protein 2 (SPSB2) from Homo sapiens (Human).